A 500-amino-acid chain; its full sequence is Aspartyl/glutamyl-tRNA(Asn/Gln) amidotransferase subunit B (500 aa).

Belongs to the GatB/GatE family. GatB subfamily. As to quaternary structure, heterotrimer of A, B and C subunits.

It carries out the reaction L-glutamyl-tRNA(Gln) + L-glutamine + ATP + H2O = L-glutaminyl-tRNA(Gln) + L-glutamate + ADP + phosphate + H(+). The enzyme catalyses L-aspartyl-tRNA(Asn) + L-glutamine + ATP + H2O = L-asparaginyl-tRNA(Asn) + L-glutamate + ADP + phosphate + 2 H(+). Allows the formation of correctly charged Asn-tRNA(Asn) or Gln-tRNA(Gln) through the transamidation of misacylated Asp-tRNA(Asn) or Glu-tRNA(Gln) in organisms which lack either or both of asparaginyl-tRNA or glutaminyl-tRNA synthetases. The reaction takes place in the presence of glutamine and ATP through an activated phospho-Asp-tRNA(Asn) or phospho-Glu-tRNA(Gln). This chain is Aspartyl/glutamyl-tRNA(Asn/Gln) amidotransferase subunit B, found in Clavibacter michiganensis subsp. michiganensis (strain NCPPB 382).